Here is a 307-residue protein sequence, read N- to C-terminus: Transcriptional repressor scratch 2 (307 aa).

The interval 1-20 (MPRSFLVKKIKGDGFQCSGV) is SNAG domain. Disordered stretches follow at residues 34–90 (LPGA…PQSS) and 116–148 (GRSR…AGAQ). Residues 124–148 (GGGGDAGGSGDAGGAGGRAGRAGAQ) show a composition bias toward gly residues. 4 C2H2-type zinc fingers span residues 155-177 (HACA…KQTH), 186-208 (RKCP…LLTH), 212-234 (HKCG…MRSH), and 240-262 (FGCA…MQTH). A C2H2-type 5; atypical zinc finger spans residues 268 to 291 (YRCRQCDKSFALKSYLHKHCEAAC).

Belongs to the snail C2H2-type zinc-finger protein family.

The protein resides in the nucleus. In terms of biological role, may be involved in transcriptional regulation. The polypeptide is Transcriptional repressor scratch 2 (SCRT2) (Homo sapiens (Human)).